An 86-amino-acid chain; its full sequence is Large ribosomal subunit protein uL23 (86 aa).

This sequence belongs to the universal ribosomal protein uL23 family. In terms of assembly, part of the 50S ribosomal subunit. Contacts protein L29.

In terms of biological role, binds to 23S rRNA. One of the proteins that surrounds the polypeptide exit tunnel on the outside of the ribosome. In Aeropyrum pernix (strain ATCC 700893 / DSM 11879 / JCM 9820 / NBRC 100138 / K1), this protein is Large ribosomal subunit protein uL23.